A 293-amino-acid polypeptide reads, in one-letter code: 33 kDa chaperonin (293 aa).

Intrachain disulfides connect C237/C239 and C271/C274.

Belongs to the HSP33 family. Under oxidizing conditions two disulfide bonds are formed involving the reactive cysteines. Under reducing conditions zinc is bound to the reactive cysteines and the protein is inactive.

It localises to the cytoplasm. In terms of biological role, redox regulated molecular chaperone. Protects both thermally unfolding and oxidatively damaged proteins from irreversible aggregation. Plays an important role in the bacterial defense system toward oxidative stress. This is 33 kDa chaperonin from Haemophilus influenzae (strain PittGG).